The following is a 1405-amino-acid chain: MKDPIDDQIPKRIKHLQFGINGPEEFVKDGTVEVSRRDLYTMTDRSPAEHGALDLHMGTSNKQINCATCGESMADCMGHFGYVKLALPVFHIGYFKATLTILQNICKDCSSVLLSDQEKRQFLKDLRRPGIDNLRRSQICKRINDHCKKMRRCSKCDAMQGVVKKAGPLKIIHERFRYVRKSQDDEENFRHSFDEALKTIPELKMHLSKAHDDLNPLKVLNLFKQITPVDCELLGMDPEHGRPENLLWRYVPAPPVCIRPSVAQEGATTEDDLTVKITEIIWTSSLIRAALSKGTPISNLMEQWEFMQLSIAMYINSEMPGLRPSDMPSKPIRGFCQRLKGKQGRFRGNLSGKRVDFSGRTVISPDPNLRIDQVAVPYRIAKILTFPERVTTQNKKHLQDCIRNGPDVHPGANYVIDRESGFKRFLRFGNRNRIADDLKIGDIVERHLHDNDVVLFNRQPSLHKLSIMAHLVKVRPWRTLRFNECVCGPYNADFDGDEMNLHVPQTEEAKTEALELMGIKNNLVSPRNGEPIIAATQDFITAAYLLSLKDTFLDRKSISNICCYMMDASTHIDLPPPAIIKPRCLWTGKQVFTVLMKPNRFSKVLVNLDAKTRSFSRIKSKTPEMCPKDGYLMIRNSEIIAGVVDKSVVGDGKKDSLFYVILRDYGALEAAEAITRLSKMCARFLGNRGFSIGIEDVQPGKSLSSQKEILVNKAYATSDDFIMQYAKGILECQPGMDQEATLEAKISSTLSKVRDDVGEICMDELGPANSPLIMATCGSKGSKINVSQMVACVGQQIISGKRVPDGFQDRSLPHFHKNSKHPLAKGFVSNSFYSGLTPTEFLFHAISGREGLVDTAVKTAETGYMSRRLMKSLEDLSSAYDGTVRSSNSDVVQFVYGDDGLDPTYMEGDGQAVEFKRTWIHSVNLNYDRHDSAMLPYEIIDYVNRALDDPKFLTNCNRDFIETIRTFVIENIAKYLASVRERRDLAPMLEEPDMDDLDDMEGDEFAPVAKRKSVENIIRVTEKQLRSFVDRCWEKYMRAKVEPGTAVGAIGAQSIGEPGTQMTLKTFHFAGVAAQTTLGVPRIKEIINAAKTISTPIITGQLINDRDERSARVVKGRIEKTYLKDVTSYIEEVYGPVTTYLSIQVNFDTISKLQLDITLADIAAAIWNTPKLKIPSQQVTVNNTLQQIHVHTSSDGKSSETEVYYRLQTYKRVLPDVVVAGIPTINRSVINQESGKIELFMEGTGLQAVMNTEGIVGTKTSTNHVMEMKDVLGIEAARYSIISEIGYTMAKHGLTVDPRHIMLLGDVMTCKGEVLGITRFGVAKMKDSVLALASFEKTTDHLFNAAARFAKDSIEGISECIVLGKLAPIGTNVFQLIRRTEEEEEQKPKELLFDTPSLHQLEITA.

Residues cysteine 66, cysteine 69, cysteine 76, histidine 79, cysteine 106, cysteine 109, and cysteine 153 each contribute to the Zn(2+) site. Residues aspartate 493, aspartate 495, and aspartate 497 each contribute to the Mg(2+) site. Residues proline 838 to glutamate 850 form a bridging helix region.

It belongs to the RNA polymerase beta' chain family. Component of the RNA polymerase III (Pol III) complex consisting of 17 subunits.

Its subcellular location is the nucleus. The enzyme catalyses RNA(n) + a ribonucleoside 5'-triphosphate = RNA(n+1) + diphosphate. In terms of biological role, DNA-dependent RNA polymerase catalyzes the transcription of DNA into RNA using the four ribonucleoside triphosphates as substrates. Largest and catalytic core component of RNA polymerase III which synthesizes small RNAs, such as 5S rRNA and tRNAs. Forms the polymerase active center together with the second largest subunit. A single-stranded DNA template strand of the promoter is positioned within the central active site cleft of Pol III. A bridging helix emanates from RPC1 and crosses the cleft near the catalytic site and is thought to promote translocation of Pol III by acting as a ratchet that moves the RNA-DNA hybrid through the active site by switching from straight to bent conformations at each step of nucleotide addition. This chain is DNA-directed RNA polymerase III subunit rpc1 (rpc1), found in Schizosaccharomyces pombe (strain 972 / ATCC 24843) (Fission yeast).